Here is a 381-residue protein sequence, read N- to C-terminus: Arf-GAP with dual PH domain-containing protein 2 (381 aa).

The Arf-GAP domain maps to 9 to 131 (KRLLELLRAP…FMADGETISL (123 aa)). The C4-type zinc finger occupies 25-48 (CADCGAADPDWASYKLGIFICLNC). PH domains lie at 132–233 (PGNR…AARL) and 255–361 (NYLK…GVLS).

Highly expressed in placenta, spleen, kidney, skeletal muscle and adrenal gland. Weakly expressed in thyroid, liver, heart, lung, small intestine, peripheral blood leukocytes. Not detected in spinal cord, brain, stomach, trachea, colon, lymph node and bone marrow.

Its subcellular location is the cytoplasm. It is found in the cell membrane. GTPase-activating protein for the ADP ribosylation factor family (Potential). Binds phosphatidylinositol 3,4,5-trisphosphate (PtdInsP3) and inositol 1,3,4,5-tetrakisphosphate (InsP4). Possesses a stoichiometry of two binding sites for InsP4 with identical affinity. The polypeptide is Arf-GAP with dual PH domain-containing protein 2 (ADAP2) (Homo sapiens (Human)).